Reading from the N-terminus, the 983-residue chain is Pro-apoptotic serine protease NMA111 (983 aa).

The segment at 1 to 40 (MSVPTKRRLSFDESTNKRFLNGTHSTENNTSNIEVDEDYG) is disordered. Positions 22 to 33 (GTHSTENNTSNI) are enriched in polar residues. The serine protease stretch occupies residues 59–260 (WQETITKVVN…LPIYRPLRAL (202 aa)). Catalysis depends on charge relay system residues histidine 108, aspartate 139, and serine 222. PDZ domains lie at 287–365 (RRLG…QRGG) and 867–948 (FWSG…MSFD).

Belongs to the peptidase S1C family.

The protein localises to the nucleus. Nuclear serine protease which mediates apoptosis. In Scheffersomyces stipitis (strain ATCC 58785 / CBS 6054 / NBRC 10063 / NRRL Y-11545) (Yeast), this protein is Pro-apoptotic serine protease NMA111 (NMA111).